Consider the following 293-residue polypeptide: Movement protein BC1 (293 aa).

It belongs to the begomovirus movement protein BC1 family. In terms of assembly, binds to dimeric supercoiled plasmid DNA. In terms of processing, phosphorylated.

Its subcellular location is the host cell membrane. It localises to the host microsome membrane. The protein localises to the host endoplasmic reticulum membrane. Functionally, transports viral genome to neighboring plant cells directly through plasmosdesmata, without any budding. The movement protein allows efficient cell to cell propagation, by bypassing the host cell wall barrier. Begomovirus genome is shuttled out of nucleus by Nuclear shuttle protein (NSP) and the movement protein transports the DNA-NSP complex to cell plasmodesmata and facilitates further movement across the cell wall. This chain is Movement protein BC1, found in Cucurbita moschata (Winter crookneck squash).